Reading from the N-terminus, the 409-residue chain is Putative lipoate-protein ligase A (409 aa).

The 185-residue stretch at 146-330 (GPDNCRLLFY…RFQKTFKVDG (185 aa)) folds into the BPL/LPL catalytic domain. ATP is bound by residues Arg188, 193–196 (GTVL), and Lys249. Lys249 contacts (R)-lipoate.

It belongs to the LplA family. As to quaternary structure, monomer.

It catalyses the reaction L-lysyl-[lipoyl-carrier protein] + (R)-lipoate + ATP = N(6)-[(R)-lipoyl]-L-lysyl-[lipoyl-carrier protein] + AMP + diphosphate + H(+). The protein operates within protein modification; protein lipoylation via exogenous pathway; protein N(6)-(lipoyl)lysine from lipoate: step 1/2. It functions in the pathway protein modification; protein lipoylation via exogenous pathway; protein N(6)-(lipoyl)lysine from lipoate: step 2/2. In terms of biological role, catalyzes both the ATP-dependent activation of exogenously supplied lipoate to lipoyl-AMP and the transfer of the activated lipoyl onto the lipoyl domains of lipoate-dependent enzymes. The chain is Putative lipoate-protein ligase A (AIM22) from Saccharomyces cerevisiae (strain ATCC 204508 / S288c) (Baker's yeast).